The chain runs to 194 residues: MPNWGGGNKCGACGRTVYHAEEVQCDGRSFHRCCFLCMVCRKNLDSTTVAIHDAEVYCKSCYGKKYGPKGYGYGQGAGTLNMDRGERLGIKPESSPSPHRPTTNPNTSKFAQKFGGAEKCSRCGDSVYAAEKVIGAGKPWHKNCFRCAKCGKSLESTTLTEKEGEIYCKGCYAKNFGPKGFGYGQGAGALVHAQ.

The region spanning 10–61 (CGACGRTVYHAEEVQCDGRSFHRCCFLCMVCRKNLDSTTVAIHDAEVYCKSC) is the LIM zinc-binding 1 domain. A Nuclear localization signal motif is present at residues 64 to 69 (KKYGPK). The disordered stretch occupies residues 85 to 110 (GERLGIKPESSPSPHRPTTNPNTSKF). Residues 94-110 (SSPSPHRPTTNPNTSKF) show a composition bias toward polar residues. Residues 120–171 (CSRCGDSVYAAEKVIGAGKPWHKNCFRCAKCGKSLESTTLTEKEGEIYCKGC) form the LIM zinc-binding 2 domain.

Its subcellular location is the nucleus. Functionally, interacts with zyxin. May be a component of a signal transduction pathway that mediates adhesion-stimulated changes in gene expression. Totally down-regulated in transformed cells. This is Cysteine and glycine-rich protein 2 (CSRP2) from Coturnix japonica (Japanese quail).